A 673-amino-acid chain; its full sequence is F-box/LRR-repeat protein 17 (673 aa).

The interval 1–39 (MGHVAPHASKKEHVAPHAAEKDHVAPHASKKEHVAPHAA) is disordered. Over residues 9–39 (SKKEHVAPHAAEKDHVAPHASKKEHVAPHAA) the composition is skewed to basic and acidic residues. An F-box domain is found at 291–338 (PLHINQLPSSLLLKIFSNLSLNERCILASLVCKYWRDLCLDSQFWKQL).

It belongs to the FBXL17 family. As to quaternary structure, part of the SCF (SKP1-CUL1-F-box) E3 ubiquitin-protein ligase complex SCF(FBXL17). Interacts with BTB domain-containing proteins; specifically recognizes and binds a conserved degron of non-consecutive residues present at the interface of BTB dimers of aberrant composition. In terms of tissue distribution, expressed in the neuro-ectoderm of embryos.

It localises to the cytoplasm. The protein localises to the nucleus. In terms of biological role, substrate-recognition component of the SCF(FBXL17) E3 ubiquitin ligase complex, a key component of a quality control pathway required to ensure functional dimerization of BTB domain-containing proteins (dimerization quality control, DQC). FBXL17 specifically recognizes and binds a conserved degron of non-consecutive residues present at the interface of BTB dimers of aberrant composition: aberrant BTB dimer are then ubiquitinated by the SCF(FBXL17) complex and degraded by the proteasome. The ability of the SCF(FBXL17) complex to eliminate compromised BTB dimers is required for the differentiation and survival of neural crest and neuronal cells. This chain is F-box/LRR-repeat protein 17, found in Xenopus laevis (African clawed frog).